The following is a 126-amino-acid chain: Small ribosomal subunit protein uS11 (126 aa).

Belongs to the universal ribosomal protein uS11 family. In terms of assembly, part of the 30S ribosomal subunit. Interacts with proteins S7 and S18. Binds to IF-3.

Functionally, located on the platform of the 30S subunit, it bridges several disparate RNA helices of the 16S rRNA. Forms part of the Shine-Dalgarno cleft in the 70S ribosome. This Orientia tsutsugamushi (strain Boryong) (Rickettsia tsutsugamushi) protein is Small ribosomal subunit protein uS11.